The chain runs to 37 residues: Large ribosomal subunit protein bL36A (37 aa).

It belongs to the bacterial ribosomal protein bL36 family.

This chain is Large ribosomal subunit protein bL36A, found in Kocuria rhizophila (strain ATCC 9341 / DSM 348 / NBRC 103217 / DC2201).